The primary structure comprises 505 residues: MSEQHAQGADAVVDLNNELKTRREKLANLREQGIAFPNDFRRDHTSDQLHAEFDGKENEELEALNIEVAVAGRMMTRRIMGKASFVTLQDVGGRIQLYVARDDLPEGVYNEQFKKWDLGDILGAKGKLFKTKTGELSIHCTELRLLTKALRPLPDKFHGLQDQEARYRQRYLDLISNDESRNTFKVRSQILSGIRQFMVNRGFMEVETPMMQVIPGGAAARPFITHHNALDLDMYLRIAPELYLKRLVVGGFERVFEINRNFRNEGISVRHNPEFTMMELYMAYADYKDLIELTESLFRTLAQDILGKTEVTYGDVTLDFGKPFEKLTMREAIKKYRPETDMADLDNFDSAKAIAESIGIHVEKSWGLGRIVTEIFEEVAEAHLIQPTFITEYPAEVSPLARRNDVNPEITDRFEFFIGGREIGNGFSELNDAEDQAQRFLDQVAAKDAGDDEAMFYDEDYVTALEHGLPPTAGLGIGIDRMVMLFTNSHTIRDVILFPAMRPVK.

2 residues coordinate Mg(2+): Glu415 and Glu422.

This sequence belongs to the class-II aminoacyl-tRNA synthetase family. Homodimer. Mg(2+) is required as a cofactor.

It localises to the cytoplasm. The catalysed reaction is tRNA(Lys) + L-lysine + ATP = L-lysyl-tRNA(Lys) + AMP + diphosphate. The chain is Lysine--tRNA ligase (lysS) from Escherichia coli (strain K12).